The chain runs to 505 residues: Katanin p60 ATPase-containing subunit A-like 2 (505 aa).

Residues 25-57 (RRKNLLILIMHYLLQEGYVDSANSLEQETKISS) enclose the LisH domain. Disordered stretches follow at residues 94 to 127 (LDHD…IGQQ) and 140 to 167 (RTNG…EASE). Polar residues-rich tracts occupy residues 114–127 (GSNS…IGQQ) and 155–164 (QESGGNSPQE). Residue 298-305 (GPPGTGKT) participates in ATP binding.

The protein belongs to the AAA ATPase family. Katanin p60 subunit A1 subfamily. A-like 2 sub-subfamily.

The protein localises to the cytoplasm. Its subcellular location is the cytoskeleton. It is found in the spindle. It localises to the spindle pole. It catalyses the reaction n ATP + n H2O + a microtubule = n ADP + n phosphate + (n+1) alpha/beta tubulin heterodimers.. Severs microtubules in vitro in an ATP-dependent manner. This activity may promote rapid reorganization of cellular microtubule arrays. The sequence is that of Katanin p60 ATPase-containing subunit A-like 2 (katnal2) from Xenopus laevis (African clawed frog).